We begin with the raw amino-acid sequence, 167 residues long: Thioredoxin-like protein HI_1115 (167 aa).

A helical transmembrane segment spans residues 10 to 27 (GLSLFLTFIVITSILDFV). One can recognise a Thioredoxin domain in the interval 30 to 167 (PVVPEEINKI…VRLFFAEFFG (138 aa)). A disulfide bond links Cys69 and Cys72.

Belongs to the thioredoxin family.

It is found in the cell membrane. This is Thioredoxin-like protein HI_1115 from Haemophilus influenzae (strain ATCC 51907 / DSM 11121 / KW20 / Rd).